Consider the following 454-residue polypeptide: O-phospho-L-seryl-tRNA:Cys-tRNA synthase 2 (454 aa).

Residues 146–147 (AR), N251, and 274–276 (SGH) contribute to the pyridoxal 5'-phosphate site. N6-(pyridoxal phosphate)lysine is present on K277.

The protein belongs to the SepCysS family. In terms of assembly, homodimer. Interacts with SepRS. Pyridoxal 5'-phosphate is required as a cofactor.

The enzyme catalyses O-phospho-L-seryl-tRNA(Cys) + hydrogen sulfide + H(+) = L-cysteinyl-tRNA(Cys) + phosphate. In terms of biological role, converts O-phospho-L-seryl-tRNA(Cys) (Sep-tRNA(Cys)) to L-cysteinyl-tRNA(Cys) (Cys-tRNA(Cys)). This Methanoregula boonei (strain DSM 21154 / JCM 14090 / 6A8) protein is O-phospho-L-seryl-tRNA:Cys-tRNA synthase 2.